A 210-amino-acid chain; its full sequence is Large ribosomal subunit protein uL4 (210 aa).

Residues 46 to 89 (QGTASTLTRSEVRGGGRKPYKQKGTGRARQGSIRTPLRPGGGII) are disordered. The span at 60–71 (GGRKPYKQKGTG) shows a compositional bias: basic residues.

Belongs to the universal ribosomal protein uL4 family. As to quaternary structure, part of the 50S ribosomal subunit.

Its function is as follows. One of the primary rRNA binding proteins, this protein initially binds near the 5'-end of the 23S rRNA. It is important during the early stages of 50S assembly. It makes multiple contacts with different domains of the 23S rRNA in the assembled 50S subunit and ribosome. Forms part of the polypeptide exit tunnel. In Prochlorococcus marinus (strain MIT 9312), this protein is Large ribosomal subunit protein uL4.